A 157-amino-acid chain; its full sequence is Protein Smg homolog (157 aa).

This sequence belongs to the Smg family.

The polypeptide is Protein Smg homolog (Aliivibrio salmonicida (strain LFI1238) (Vibrio salmonicida (strain LFI1238))).